The sequence spans 76 residues: Tautomerase PptA (76 aa).

Catalysis depends on P2, which acts as the Proton acceptor; via imino nitrogen.

This sequence belongs to the 4-oxalocrotonate tautomerase family. PptA subfamily. In terms of assembly, homodimer.

The protein localises to the cytoplasm. The protein is Tautomerase PptA of Cronobacter sakazakii (strain ATCC BAA-894) (Enterobacter sakazakii).